The primary structure comprises 440 residues: Adenylosuccinate synthetase 1, chloroplastic (440 aa).

Residues 13–19 and 41–43 each bind GTP; these read GDEGKGK and GHT. The active-site Proton acceptor is the Asp-14. Asp-14 and Gly-41 together coordinate Mg(2+). Residues 14–17, 39–42, Thr-135, Arg-149, Gln-230, Thr-245, and Arg-313 contribute to the IMP site; these read DEGK and NAGH. The active-site Proton donor is His-42. Substrate is bound at residue 309–315; it reads TVTRRKR. GTP-binding positions include Arg-315 and 341–343; that span reads KLD.

Belongs to the adenylosuccinate synthetase family. As to quaternary structure, homodimer. Mg(2+) serves as cofactor.

Its subcellular location is the plastid. It localises to the chloroplast. It carries out the reaction IMP + L-aspartate + GTP = N(6)-(1,2-dicarboxyethyl)-AMP + GDP + phosphate + 2 H(+). It participates in purine metabolism; AMP biosynthesis via de novo pathway; AMP from IMP: step 1/2. Plays an important role in the de novo pathway and in the salvage pathway of purine nucleotide biosynthesis. Catalyzes the first committed step in the biosynthesis of AMP from IMP. The sequence is that of Adenylosuccinate synthetase 1, chloroplastic from Ricinus communis (Castor bean).